The chain runs to 536 residues: Glutamate--tRNA ligase, mitochondrial (536 aa).

48–50 (RFA) lines the L-glutamate pocket. The short motif at 53-61 (PTGFLHLGS) is the 'HIGH' region element. His-58 provides a ligand contact to ATP. L-glutamate is bound by residues Glu-84, 235–239 (YHLAN), and Arg-253. ATP-binding positions include Glu-256 and 291 to 295 (KLSKR). A 'KMSKS' region motif is present at residues 291–295 (KLSKR).

It belongs to the class-I aminoacyl-tRNA synthetase family. Glutamate--tRNA ligase type 1 subfamily.

It is found in the mitochondrion matrix. The catalysed reaction is tRNA(Glu) + L-glutamate + ATP = L-glutamyl-tRNA(Glu) + AMP + diphosphate. In terms of biological role, catalyzes the attachment of glutamate to tRNA(Glu) in a two-step reaction: glutamate is first activated by ATP to form Glu-AMP and then transferred to the acceptor end of tRNA(Glu). This Saccharomyces cerevisiae (strain ATCC 204508 / S288c) (Baker's yeast) protein is Glutamate--tRNA ligase, mitochondrial (MSE1).